The chain runs to 782 residues: MEHKLATAEKKLLVDLVKLVQKRGLEGENGGWKEFLNVYDKKLGSSLSDPARRSNDVLVAFLLTFKKKEDLQLIARVMQCGANRELIEKFKQETPDKETPEQRLVRLTITHDDYPGNYTFPSYAEDWYVTELGKKKSKVIKSTRMLSIDCEMVTCEDGSQALVRVGAVDRDLKVVLDKFVKPDKPVIDYKTDITGVTAEDLERATLSVADIQKKLRRFLSVGTILVGHGLHNDLQVLRIDHARVIDTSYVFEFVDAPKTQRPSLNNLCKSVLGQEVRMDGAAHNCVHDAAAAMKLVLAAVEKGAATLIQPTEEMMVAEKRRQEARQEAGKAQLFLHKIPHDVPSEELHGVLSGNFTLVVKPPKTGGYSTAVVDFSSPEEANEAFENVEGDVAKDKSGLPQKKAVLKLSSGLAVSLFVRKMVQDDSPCEISTSERARAEENNVSSKRQKTEDETEETKEATVNQREADKTKLFLHKIPHDVPSQELHGVLNGDFTLDVKPPKRKGGYYNAVVDFNSPEEANEAFENVEGDVVKDKTGLPQKMVVFKLSSGSGVSLYVRKMVHDDSPGEISTTKRARTEESNMSSKRQKTEDESEETKEANAKQREADKTKLLLHKIPLNVPSQELKVVITGQFTLEVMPPKRKGRYYNAVVTFNSPEEANKAFEKVKGEAVKEKGGLAQKMVAFKLSSGSGACLYVRKMVQDESEETKEANANHCEDDHLKEMEELKEKLKAMEFAISCEGHSKEIEELKQKLNAKEHQIQAQDKIIANLKMKLEKKQSKSRS.

An Exonuclease domain is found at 145–296 (MLSIDCEMVT…HDAAAAMKLV (152 aa)). Residues 331–410 (AQLFLHKIPH…KKAVLKLSSG (80 aa)) enclose the RRM 1 domain. Positions 426–464 (PCEISTSERARAEENNVSSKRQKTEDETEETKEATVNQR) are disordered. Positions 469–549 (TKLFLHKIPH…KMVVFKLSSG (81 aa)) constitute an RRM 2 domain. A disordered region spans residues 563-605 (DSPGEISTTKRARTEESNMSSKRQKTEDESEETKEANAKQREA). A coiled-coil region spans residues 577–605 (EESNMSSKRQKTEDESEETKEANAKQREA). The span at 595-605 (TKEANAKQREA) shows a compositional bias: basic and acidic residues. The RRM 3 domain maps to 608–688 (TKLLLHKIPL…KMVAFKLSSG (81 aa)). Positions 709–779 (ANANHCEDDH…KMKLEKKQSK (71 aa)) form a coiled coil.

It belongs to the REXO1/REXO3 family. As to quaternary structure, associated with the Mediator complex.

It is found in the nucleus. 3'-5' exonuclease degrading single-stranded small RNAs. The sequence is that of Small RNA degrading nuclease 3 (SDN3) from Arabidopsis thaliana (Mouse-ear cress).